A 746-amino-acid polypeptide reads, in one-letter code: MCASPSTAPGFFNPRPQSGAELSAFDIGLSRSMGLGVPPHSAWHEPPASLGGHLHAASAGPGTTTGSVATGGGGTTPSSVASQQSAVIKQDLSCPSLNQAGSGHHPGIKEDLSSSLPSANGGSAGGHHSGSGSGSGSGVNPGHGSDMLPLIKGHGQDMLTSIKGQPTGCGSTTPSSQANSSHSQSSNSGSQIDSKQNIECVVCGDKSSGKHYGQFTCEGCKSFFKRSVRRNLTYSCRGSRNCPIDQHHRNQCQYCRLKKCLKMGMRREAVQRGRVPPTQPGLAGMHGQYQIANGDPMGIAGFNGHSYLSSYISLLLRAEPYPTSRYGQCMQPNNIMGIDNICELAARLLFSAVEWAKNIPFFPELQVTDQVALLRLVWSELFVLNASQCSMPLHVAPLLAAAGLHASPMAADRVVAFMDHIRIFQEQVEKLKALHVDSAEYSCLKAIVLFTTGKLLDILYKDVPALLTKVSALLGKGSTASNDDVLAVVRDHLDELNRQEQESQAQQQAPLHLAAFMNCVAGVEAAVQQAEQAQVPTSSASASVSAPLVPSAGSAFSSCQAKSAGSEMDLLASLYAQAQATPPSSGGGDASGHNNSSGLGASLPTQSQSGSSSRNLTASPLSTSLATAPAPASASAPAPVPTSSVAQVPVPAPVPVTSSASSSSLGGGAYQTPSAAAAAAAMFHYQTPPRAAFGSAFDMFHHSTPFGVGVGHAHALAHSSGSGSASFGSPSYRYSPYSLAGSRWQL.

The interval 38–191 (PPHSAWHEPP…HSQSSNSGSQ (154 aa)) is disordered. The span at 56–68 (AASAGPGTTTGSV) shows a compositional bias: low complexity. Positions 83 to 101 (QQSAVIKQDLSCPSLNQAG) are enriched in polar residues. A compositionally biased stretch (gly residues) spans 122-141 (GSAGGHHSGSGSGSGSGVNP). Residues 158-170 (MLTSIKGQPTGCG) are compositionally biased toward polar residues. Positions 171 to 191 (STTPSSQANSSHSQSSNSGSQ) are enriched in low complexity. A DNA-binding region (nuclear receptor) is located at residues 197–272 (NIECVVCGDK…MGMRREAVQR (76 aa)). 2 consecutive NR C4-type zinc fingers follow at residues 200–220 (CVVC…CEGC) and 236–260 (CRGS…LKKC). The NR LBD domain maps to 307–556 (YLSSYISLLL…PLVPSAGSAF (250 aa)). The segment at 579-645 (QATPPSSGGG…APAPVPTSSV (67 aa)) is disordered. A compositionally biased stretch (polar residues) spans 592–605 (GHNNSSGLGASLPT). The segment covering 606–645 (QSQSGSSSRNLTASPLSTSLATAPAPASASAPAPVPTSSV) has biased composition (low complexity).

It belongs to the nuclear hormone receptor family. NR2 subfamily. In terms of tissue distribution, expressed in several embryonic tissues; dorsal vessel, oenocyte and fat body. CNS expression is dynamic and confined to temporally restricted subsections of the NB lineage; expressed in many NB and GMCs, but only a small number of neurons.

It localises to the nucleus. Receptor that is required in photoreceptors R1, R3, R4 and R6 during eye development; generation of the ganglion mother cell-2 (GMC-2) fate in the nb7-3 lineage, coinciding with the transition in the expression of HB to KR in the neuroblasts (NBs). This chain is Steroid receptor seven-up, isoform A (svp), found in Drosophila melanogaster (Fruit fly).